The primary structure comprises 363 residues: 3-methyl-D-ornithine--L-lysine ligase (363 aa).

Lys-10 serves as a coordination point for ATP. L-lysine is bound at residue Leu-11–Gln-12. Residues Asp-31, Asp-49–Val-50, and Glu-72–Asn-73 contribute to the ATP site. Glu-72 is an L-lysine binding site. Residues Lys-104, Lys-131, Ser-138, and Glu-160–Val-163 each bind ADP. D-ornithine is bound by residues Ser-169–Glu-171 and Asp-225. Mg(2+)-binding residues include Glu-227, Glu-239, and Asp-241. An ADP-binding site is contributed by Glu-239. D-ornithine contacts are provided by residues Arg-243 to Thr-248 and Glu-302. Positions 246 and 302 each coordinate L-lysine.

This sequence belongs to the PylC family. The cofactor is Mg(2+).

The catalysed reaction is (3R)-3-methyl-D-ornithine + L-lysine + ATP = (3R)-3-methyl-D-ornithyl-N(6)-L-lysine + ADP + phosphate + H(+). It functions in the pathway amino-acid biosynthesis; L-pyrrolysine biosynthesis. In terms of biological role, is required for the biosynthesis of pyrrolysine. Catalyzes the ATP-dependent ligation between (3R)-3-methyl-D-ornithine and L-lysine, leading to (3R)-3-methyl-D-ornithyl-N6-L-lysine. This is 3-methyl-D-ornithine--L-lysine ligase from Methanosarcina barkeri (strain Fusaro / DSM 804).